We begin with the raw amino-acid sequence, 919 residues long: Plasma membrane ATPase 1 (919 aa).

Residues 1 to 16 are compositionally biased toward basic and acidic residues; it reads MADNAGEYHDAEKHAP. Positions 1–73 are disordered; the sequence is MADNAGEYHD…APAAGEAKAV (73 aa). The Cytoplasmic segment spans residues 1–113; sequence MADNAGEYHD…KEELENPFLK (113 aa). Acidic residues predominate over residues 34-63; sequence QDDEPDDDIDALIEELFSEDVQEEQEDNDD. Position 89 is a phosphoserine (Ser-89). The chain crosses the membrane as a helical span at residues 114 to 134; it reads FIMFFVGPIQFVMEMAAALAA. The Extracellular segment spans residues 135–138; it reads GLRD. A helical transmembrane segment spans residues 139-158; sequence WVDFGVICALLMLNAVVGFV. Over 159 to 289 the chain is Cytoplasmic; sequence QEYQAGSIVD…GTGHFTEVLN (131 aa). The helical transmembrane segment at 290-311 threads the bilayer; it reads GIGTILLVLVLLTLFCIYTAAF. The Extracellular segment spans residues 312–322; the sequence is YRSVRLARLLE. The chain crosses the membrane as a helical span at residues 323–345; sequence YTLAITIIGVPVGLPAVVTTTMA. Residues 346–717 are Cytoplasmic-facing; that stretch reads VGAAYLAEKQ…LIIRNQLLNL (372 aa). Asp-376 serves as the catalytic 4-aspartylphosphate intermediate. Ser-494 bears the Phosphoserine mark. 2 residues coordinate Mg(2+): Asp-632 and Asp-636. Residues 718–736 form a helical membrane-spanning segment; that stretch reads ELVVFIAIFADVATLAIAY. At 737–752 the chain is on the extracellular side; it reads DNAPYSMKPVKWNLPR. A helical transmembrane segment spans residues 753-772; sequence LWGLSTVIGIVLAIGTWITN. Topologically, residues 773–824 are cytoplasmic; it reads TTMIAQGQNRGIVQNFGVQDEVLFLEISLTENWLIFVTRCNGPFWSSIPSWQ. A helical transmembrane segment spans residues 825-845; that stretch reads LSGAVLAVDILATMFCIFGWF. At 846–858 the chain is on the extracellular side; sequence KGGHQTSIVAVLR. A helical transmembrane segment spans residues 859-875; it reads IWMYSFGIFCIMAGTYY. The Cytoplasmic portion of the chain corresponds to 876–919; sequence ILSESAGFDRMMNGKPKESRNQRSIEDLVVALQRTSTRHEKGDA. Position 899 is a phosphoserine (Ser-899).

The protein belongs to the cation transport ATPase (P-type) (TC 3.A.3) family. Type IIIA subfamily.

It localises to the cell membrane. The catalysed reaction is ATP + H2O + H(+)(in) = ADP + phosphate + 2 H(+)(out). Functionally, the plasma membrane ATPase of plants and fungi is a hydrogen ion pump. The proton gradient it generates drives the active transport of nutrients by H(+)-symport. The resulting external acidification and/or internal alkinization may mediate growth responses. In Schizosaccharomyces pombe (strain 972 / ATCC 24843) (Fission yeast), this protein is Plasma membrane ATPase 1 (pma1).